The primary structure comprises 245 residues: Zinc finger protein 575 (245 aa).

Residues 1-67 (MLERGAESAA…PPQRPHRCPD (67 aa)) form a disordered region. Residues 36-49 (PSQSAPGPTASAGS) show a composition bias toward low complexity. Residues 52-63 (RPRRRPPPQRPH) show a composition bias toward basic residues. C2H2-type zinc fingers lie at residues 63–85 (HRCPDCDKAFSYPSKLATHRLAH), 91–113 (HPCPDCPKAFSYPSKLAAHRLTH), 119–141 (HPCPHCPKSFGHRSKLAAHLWTH), 147–169 (YPCPDCPKSFCYPSKLAAHRHTH), 177–199 (YPCPHCPKAFSFPSKLAAHRLCH), and 213–240 (HRCSSCGQAFGQRRLLLLHQRSHHQVEH).

This sequence belongs to the krueppel C2H2-type zinc-finger protein family.

The protein resides in the nucleus. In terms of biological role, may be involved in transcriptional regulation. The protein is Zinc finger protein 575 (ZNF575) of Homo sapiens (Human).